The chain runs to 475 residues: ATP synthase subunit beta (475 aa).

ATP is bound at residue 154–161 (GGAGVGKT).

The protein belongs to the ATPase alpha/beta chains family. As to quaternary structure, F-type ATPases have 2 components, CF(1) - the catalytic core - and CF(0) - the membrane proton channel. CF(1) has five subunits: alpha(3), beta(3), gamma(1), delta(1), epsilon(1). CF(0) has three main subunits: a(1), b(2) and c(9-12). The alpha and beta chains form an alternating ring which encloses part of the gamma chain. CF(1) is attached to CF(0) by a central stalk formed by the gamma and epsilon chains, while a peripheral stalk is formed by the delta and b chains.

The protein localises to the cell inner membrane. The enzyme catalyses ATP + H2O + 4 H(+)(in) = ADP + phosphate + 5 H(+)(out). Produces ATP from ADP in the presence of a proton gradient across the membrane. The catalytic sites are hosted primarily by the beta subunits. This Hyphomonas neptunium (strain ATCC 15444) protein is ATP synthase subunit beta.